The following is a 626-amino-acid chain: L-amino-acid oxidase 4 (626 aa).

Residues 1–18 form the signal peptide; sequence KSFFRSLVAASLVIVSYS. Asn-54 is a glycosylation site (N-linked (GlcNAc...) asparagine). Residues Gly-75, Glu-94, Ala-95, Arg-102, Met-122, and Arg-123 each contribute to the FAD site. Residue Arg-123 coordinates L-glutamate. Position 123 (Arg-123) interacts with L-glutamine. Arg-123 is an L-lysine binding site. Residue Arg-123 participates in L-phenylalanine binding. N-linked (GlcNAc...) asparagine glycosylation is found at Asn-164, Asn-193, and Asn-331. Residue Val-334 participates in FAD binding. Residue Tyr-457 participates in L-glutamate binding. Tyr-457 contacts L-glutamine. Tyr-457 is an L-lysine binding site. Position 457 (Tyr-457) interacts with L-phenylalanine. Residue Glu-551 coordinates FAD. Ala-558 is a binding site for L-phenylalanine. FAD contacts are provided by Trp-559 and Val-560.

It belongs to the flavin monoamine oxidase family. FIG1 subfamily. Homodimer. FAD serves as cofactor. Out of the 4 glycosylated residues, Asn-54 is hypermannosylated. The presence of a hypermannosylated N-glycan on Asn-54 leads to adoption of a more active conformation in the absence of acid activation.

The protein localises to the secreted. The enzyme catalyses an L-alpha-amino acid + O2 + H2O = a 2-oxocarboxylate + H2O2 + NH4(+). It catalyses the reaction L-lysine + O2 + H2O = 6-amino-2-oxohexanoate + H2O2 + NH4(+). It carries out the reaction L-glutamate + O2 + H2O = H2O2 + 2-oxoglutarate + NH4(+). The catalysed reaction is L-arginine + O2 + H2O = 5-guanidino-2-oxopentanoate + H2O2 + NH4(+). The enzyme catalyses L-leucine + O2 + H2O = 4-methyl-2-oxopentanoate + H2O2 + NH4(+). It catalyses the reaction L-asparagine + O2 + H2O = 2-oxosuccinamate + H2O2 + NH4(+). It carries out the reaction L-histidine + O2 + H2O = 3-(imidazol-5-yl)pyruvate + H2O2 + NH4(+). The catalysed reaction is L-isoleucine + O2 + H2O = (S)-3-methyl-2-oxopentanoate + H2O2 + NH4(+). The enzyme catalyses L-methionine + O2 + H2O = 4-methylsulfanyl-2-oxobutanoate + H2O2 + NH4(+). It catalyses the reaction L-phenylalanine + O2 + H2O = 3-phenylpyruvate + H2O2 + NH4(+). It carries out the reaction L-tyrosine + O2 + H2O = 3-(4-hydroxyphenyl)pyruvate + H2O2 + NH4(+). The catalysed reaction is L-glutamine + O2 + H2O = 2-oxoglutaramate + H2O2 + NH4(+). The enzyme catalyses L-alanine + O2 + H2O = pyruvate + H2O2 + NH4(+). Its activity is regulated as follows. LAAO4 is activated by exposure to acidic pH, the detergent sodium dodecyl sulfate, or freezing. Its function is as follows. Catalyzes the oxidative deamination of L-amino acids with molecular oxygen to the corresponding alpha-keto acids and ammonia. L-glutamine shows the highest relative activity but LAAO4 has a broad substrate specificity, including L-amino acids with big aromatic, acidic and basic side chains. Methyl esters of these L-amino acids are also accepted, ethyl esters are converted but with lower activity, whereas D-Amino acids are not converted. No reaction is detected for small polar amino acids such as L-cysteine or L-aspartate, and very little for small, branched hydrophobic amino acids like L-valine. This Hebeloma cylindrosporum protein is L-amino-acid oxidase 4.